We begin with the raw amino-acid sequence, 245 residues long: Probable phosphatase YE2421 (245 aa).

Zn(2+) contacts are provided by His7, His9, His15, His40, Glu73, His101, His131, Asp192, and His194.

This sequence belongs to the PHP family. In terms of assembly, homotrimer. Requires Zn(2+) as cofactor.

In Yersinia enterocolitica serotype O:8 / biotype 1B (strain NCTC 13174 / 8081), this protein is Probable phosphatase YE2421.